A 950-amino-acid chain; its full sequence is Protocadherin alpha-9 (950 aa).

Positions 1-29 (MLYSSRGDPEGQPLLLSLLILAMWVVGSG) are cleaved as a signal peptide. Cadherin domains are found at residues 30–133 (QLHY…PPVF), 134–242 (PATQ…APVF), 243–350 (DRTL…APQL), 351–455 (TIKT…APAF), 456–565 (AQSE…APAL), and 588–678 (GVVV…APKS). Residues 30-697 (QLHYSVPEEA…GPEVTLVDVN (668 aa)) are Extracellular-facing. N-linked (GlcNAc...) asparagine glycosylation is found at asparagine 254 and asparagine 265. A glycan (N-linked (GlcNAc...) asparagine) is linked at asparagine 548. A helical membrane pass occupies residues 698-718 (VYLIIAICAVSSLLVLTLLLY). Residues 719–950 (TVLRCSAMPT…GNSTTDNSDQ (232 aa)) lie on the Cytoplasmic side of the membrane. Residues 734-737 (PGKP) form a PXXP 1 repeat. A 5 X 4 AA repeats of P-X-X-P region spans residues 734 to 894 (PGKPTLVCSS…PDKFIIPGSP (161 aa)). Disordered regions lie at residues 770 to 808 (MAFS…DWRY), 827 to 856 (ILRA…EVSP), and 871 to 950 (YGPG…NSDQ). Residues 789-798 (PSASSDSTGK) show a composition bias toward polar residues. PXXP repeat units follow at residues 799–802 (PRQP), 832–835 (PGGP), 873–876 (PGNP), and 891–894 (PGSP). Over residues 909–923 (DKSDFITFGKKEETK) the composition is skewed to basic and acidic residues.

It is found in the cell membrane. Potential calcium-dependent cell-adhesion protein. May be involved in the establishment and maintenance of specific neuronal connections in the brain. The sequence is that of Protocadherin alpha-9 (PCDHA9) from Homo sapiens (Human).